Here is a 406-residue protein sequence, read N- to C-terminus: MKKILQSIVFKRLSWTVLFLFIYVLGSHLVLPFIDLKHPKLLGGLSNSIAFTSAMMGGNLSSFSLFSVGLSPWMSAMILWQMFSFSKKSGLSKLPIEIQDRRKMYLTFAIALIQSLAVSLSLPIEVGIPKGLAILTNTILLIAGTFFLVWLSDLNSFFGIGGSIVILMASMVANLPRQIGESITRLHIGLPIILSLIIMGLLFLYIAVIVQRARYRIPINKVNIHNRFSQYSYLDVMLTPAGGMPFMYAISLVSIPQYLLILIQILFPKNSWTNTWIEALTVGHPIWLVLYQVVLFVLGIAFAFVNVSGEQIAERMRKSGEYIYNVYPGPDTSRYINKVVMKFAVIGAIYTVIMAGGPMMIVLINPQYLQLSMIPGMFLIYSGMVYNVREEIAAMTLNESYKGLFD.

Helical transmembrane passes span 14–34 (SWTVLFLFIYVLGSHLVLPFI), 63–83 (FSLFSVGLSPWMSAMILWQMF), 108–128 (FAIALIQSLAVSLSLPIEVGI), 131–151 (GLAILTNTILLIAGTFFLVWL), 156–176 (SFFGIGGSIVILMASMVANLP), 190–210 (LPIILSLIIMGLLFLYIAVIV), 246–266 (FMYAISLVSIPQYLLILIQIL), 285–305 (PIWLVLYQVVLFVLGIAFAFV), 344–364 (AVIGAIYTVIMAGGPMMIVLI), and 368–388 (YLQLSMIPGMFLIYSGMVYNV).

Belongs to the SecY/SEC61-alpha family. SecY2 subfamily. Component of the accessory SecA2/SecY2 protein translocase complex required to export cell wall proteins. May form heterotrimers with SecE and SecG subunits.

Its subcellular location is the cell membrane. Part of the accessory SecA2/SecY2 system specifically required for export of possible cell wall proteins. The central subunit of a protein translocation channel. This is Accessory Sec system protein translocase subunit SecY2 from Streptococcus salivarius (strain CCHSS3).